The sequence spans 206 residues: Transmembrane emp24 domain-containing protein bai (206 aa).

Residues M1–G20 form the signal peptide. Over V21–R172 the chain is Lumenal. The GOLD domain maps to Q30–R140. Residues V173–L193 traverse the membrane as a helical segment. Over Y194–E206 the chain is Cytoplasmic.

Belongs to the EMP24/GP25L family.

Its subcellular location is the membrane. In terms of biological role, eca and bai are essential, though not redundant, for dorsoventral patterning of the embryo. Specifically required during early embryogenesis for the activity of maternal tkv, while the zygotic tkv is not affected. The sequence is that of Transmembrane emp24 domain-containing protein bai from Drosophila grimshawi (Hawaiian fruit fly).